We begin with the raw amino-acid sequence, 391 residues long: 3-ketoacyl-CoA thiolase (391 aa).

The active-site Acyl-thioester intermediate is the C95. Residues H347 and C377 each act as proton acceptor in the active site.

This sequence belongs to the thiolase-like superfamily. Thiolase family. In terms of assembly, heterotetramer of two alpha chains (FadB) and two beta chains (FadA).

The protein localises to the cytoplasm. The enzyme catalyses an acyl-CoA + acetyl-CoA = a 3-oxoacyl-CoA + CoA. Its pathway is lipid metabolism; fatty acid beta-oxidation. Catalyzes the final step of fatty acid oxidation in which acetyl-CoA is released and the CoA ester of a fatty acid two carbons shorter is formed. This chain is 3-ketoacyl-CoA thiolase, found in Ectopseudomonas mendocina (strain ymp) (Pseudomonas mendocina).